The primary structure comprises 158 residues: Ribosome maturation factor RimP (158 aa).

The protein belongs to the RimP family.

The protein localises to the cytoplasm. Its function is as follows. Required for maturation of 30S ribosomal subunits. The polypeptide is Ribosome maturation factor RimP (Pseudomonas fluorescens (strain SBW25)).